The sequence spans 274 residues: 2,3,4,5-tetrahydropyridine-2,6-dicarboxylate N-succinyltransferase (274 aa).

Arg-106 and Asp-143 together coordinate substrate.

This sequence belongs to the transferase hexapeptide repeat family. Homotrimer.

It localises to the cytoplasm. The catalysed reaction is (S)-2,3,4,5-tetrahydrodipicolinate + succinyl-CoA + H2O = (S)-2-succinylamino-6-oxoheptanedioate + CoA. The protein operates within amino-acid biosynthesis; L-lysine biosynthesis via DAP pathway; LL-2,6-diaminopimelate from (S)-tetrahydrodipicolinate (succinylase route): step 1/3. This chain is 2,3,4,5-tetrahydropyridine-2,6-dicarboxylate N-succinyltransferase, found in Albidiferax ferrireducens (strain ATCC BAA-621 / DSM 15236 / T118) (Rhodoferax ferrireducens).